The following is a 95-amino-acid chain: Protein IDA-LIKE 2 (95 aa).

Residues 1-35 form the signal peptide; that stretch reads MSSRNQRSRITSSFFVSFFTRTILLLLILLLGFCN. The tract at residues 75–95 is disordered; it reads ASGPSRKHNDIGLLSWHRSSP.

As to expression, expressed in leaves, buds, flowers, seedlings and seeds. Detected at the base of pedicel, in the floral and funicule abscission zones and in vascular tissues.

It localises to the secreted. It is found in the extracellular space. May be involved in floral abscission. This chain is Protein IDA-LIKE 2 (IDL2), found in Arabidopsis thaliana (Mouse-ear cress).